Here is an 868-residue protein sequence, read N- to C-terminus: mRNA-capping enzyme (868 aa).

Lys282 acts as the N6-GMP-lysine intermediate in catalysis. Residues 594–868 form the mRNA cap 0 methyltransferase domain; the sequence is GIYRAQTALI…LFGFICLRKN (275 aa). Residues Lys607, Gly624, Asp646, and 710 to 712 contribute to the S-adenosyl-L-methionine site; that span reads LFI.

It in the N-terminal section; belongs to the dsDNA virus mRNA guanylyltransferase family. This sequence in the C-terminal section; belongs to the class I-like SAM-binding methyltransferase superfamily. mRNA cap 0 methyltransferase family. In terms of assembly, part of the viral DNA-directed RNA polymerase that consists of 8 polII-like subunits (RPB1, RPB2, RPB3, RPB5, RPB6, RPB7, RPB9, RPB10), a capping enzyme and a termination factor.

The protein resides in the virion. The catalysed reaction is a 5'-end triphospho-ribonucleoside in mRNA + H2O = a 5'-end diphospho-ribonucleoside in mRNA + phosphate + H(+). It catalyses the reaction a 5'-end diphospho-ribonucleoside in mRNA + GTP + H(+) = a 5'-end (5'-triphosphoguanosine)-ribonucleoside in mRNA + diphosphate. It carries out the reaction a 5'-end (5'-triphosphoguanosine)-ribonucleoside in mRNA + S-adenosyl-L-methionine = a 5'-end (N(7)-methyl 5'-triphosphoguanosine)-ribonucleoside in mRNA + S-adenosyl-L-homocysteine. The protein operates within mRNA processing; mRNA capping. Functionally, probably catalyzes the second reaction in the mRNA cap formation pathway. Forms a covalent complex with GTP. The sequence is that of mRNA-capping enzyme from Ornithodoros (relapsing fever ticks).